A 62-amino-acid chain; its full sequence is Conotoxin TxIC (62 aa).

The first 22 residues, 1 to 22 (MHCLPIFVILLLLTASGPSVDA), serve as a signal peptide directing secretion. Residues 23-47 (QLKTKDDVPLSSFRDHAKSTLRRLQ) constitute a propeptide that is removed on maturation. Intrachain disulfides connect Cys52–Cys58 and Cys53–Cys61. Pro60 bears the 4-hydroxyproline mark. Cysteine amide is present on Cys61.

Belongs to the conotoxin A superfamily. As to expression, expressed by the venom duct.

It localises to the secreted. The chain is Conotoxin TxIC from Conus textile (Cloth-of-gold cone).